The primary structure comprises 329 residues: GMP reductase (329 aa).

Cys-178 functions as the Thioimidate intermediate in the catalytic mechanism. 207–230 (VIADGGIRTHGDVAKSIRMGATMV) is an NADP(+) binding site.

The protein belongs to the IMPDH/GMPR family. GuaC type 2 subfamily.

It catalyses the reaction IMP + NH4(+) + NADP(+) = GMP + NADPH + 2 H(+). Functionally, catalyzes the irreversible NADPH-dependent deamination of GMP to IMP. It functions in the conversion of nucleobase, nucleoside and nucleotide derivatives of G to A nucleotides, and in maintaining the intracellular balance of A and G nucleotides. This Lactococcus lactis subsp. cremoris (strain MG1363) protein is GMP reductase.